The sequence spans 396 residues: L-lactate dehydrogenase (396 aa).

The 380-residue stretch at 1–380 (MIISAASDYR…SGDSLVQELG (380 aa)) folds into the FMN hydroxy acid dehydrogenase domain. Tyr24 contacts substrate. The FMN site is built by Ser106 and Gln127. Tyr129 contributes to the substrate binding site. Thr155 is an FMN binding site. Residue Arg164 coordinates substrate. Lys251 is a binding site for FMN. Residue His275 is the Proton acceptor of the active site. Arg278 lines the substrate pocket. Residue 306–330 (DSGIRNGLDVVRMIALGADTVLLGR) participates in FMN binding.

This sequence belongs to the FMN-dependent alpha-hydroxy acid dehydrogenase family. The cofactor is FMN.

Its subcellular location is the cell inner membrane. The enzyme catalyses (S)-lactate + A = pyruvate + AH2. In terms of biological role, catalyzes the conversion of L-lactate to pyruvate. Is coupled to the respiratory chain. The protein is L-lactate dehydrogenase of Salmonella paratyphi B (strain ATCC BAA-1250 / SPB7).